We begin with the raw amino-acid sequence, 207 residues long: MHKIINHPLIKDKLTRMRKVSTVSTVFRTNLEELTQLMVYEATKDLELNEIEIETPVVKVAKGYKLKNKICLIPILRAGIGMVDGVKSLIPTATIGHIGLYRNEQTLKPVEYFKKFPKNISESDVIILDPMLATGGSVVEAVNIIKKYNPKSIKFVCIVAAPEGLKYVQEVHPEVDVYIAALDDKLNENGYITPGLGDAGDRIFGTK.

5-phospho-alpha-D-ribose 1-diphosphate-binding positions include Arg-77, Arg-102, and 129 to 137 (DPMLATGGS). Uracil-binding positions include Ile-192 and 197 to 199 (GDA). Position 198 (Asp-198) interacts with 5-phospho-alpha-D-ribose 1-diphosphate.

This sequence belongs to the UPRTase family. Mg(2+) is required as a cofactor.

It carries out the reaction UMP + diphosphate = 5-phospho-alpha-D-ribose 1-diphosphate + uracil. It functions in the pathway pyrimidine metabolism; UMP biosynthesis via salvage pathway; UMP from uracil: step 1/1. Its activity is regulated as follows. Allosterically activated by GTP. Its function is as follows. Catalyzes the conversion of uracil and 5-phospho-alpha-D-ribose 1-diphosphate (PRPP) to UMP and diphosphate. This Ureaplasma parvum serovar 3 (strain ATCC 27815 / 27 / NCTC 11736) protein is Uracil phosphoribosyltransferase.